We begin with the raw amino-acid sequence, 312 residues long: DNA-directed RNA polymerase subunit alpha (312 aa).

An alpha N-terminal domain (alpha-NTD) region spans residues 1–226 (MIEFEKPNIT…EHFKVFMSTD (226 aa)). The alpha C-terminal domain (alpha-CTD) stretch occupies residues 243–312 (NEKKLEMTIE…DLGLSLRQDD (70 aa)).

The protein belongs to the RNA polymerase alpha chain family. Homodimer. The RNAP catalytic core consists of 2 alpha, 1 beta, 1 beta' and 1 omega subunit. When a sigma factor is associated with the core the holoenzyme is formed, which can initiate transcription.

It carries out the reaction RNA(n) + a ribonucleoside 5'-triphosphate = RNA(n+1) + diphosphate. Its function is as follows. DNA-dependent RNA polymerase catalyzes the transcription of DNA into RNA using the four ribonucleoside triphosphates as substrates. In Lactobacillus johnsonii (strain CNCM I-12250 / La1 / NCC 533), this protein is DNA-directed RNA polymerase subunit alpha.